Consider the following 454-residue polypeptide: Adenylosuccinate synthetase isozyme 1 B (454 aa).

The segment at 1–24 is disordered; that stretch reads MSGTRASNDRSSHPGAGGHKRPRY. GTP contacts are provided by residues 39-45 and 67-69; these read GDEGKGK and GHT. D40 functions as the Proton acceptor in the catalytic mechanism. Mg(2+) is bound by residues D40 and G67. Residue D40 participates in substrate binding. Residues 40 to 43, 65 to 68, T160, R174, N253, T268, and R332 each bind IMP; these read DEGK and NAGH. Catalysis depends on H68, which acts as the Proton donor. 328-334 serves as a coordination point for substrate; it reads VTTGRKR. GTP-binding positions include R334, 360-362, and 442-445; these read KLD and GVGK.

The protein belongs to the adenylosuccinate synthetase family. Homodimer. Mg(2+) is required as a cofactor.

It localises to the cytoplasm. It catalyses the reaction IMP + L-aspartate + GTP = N(6)-(1,2-dicarboxyethyl)-AMP + GDP + phosphate + 2 H(+). The protein operates within purine metabolism; AMP biosynthesis via de novo pathway; AMP from IMP: step 1/2. In terms of biological role, component of the purine nucleotide cycle (PNC), which interconverts IMP and AMP to regulate the nucleotide levels in various tissues, and which contributes to glycolysis and ammoniagenesis. Catalyzes the first committed step in the biosynthesis of AMP from IMP. The polypeptide is Adenylosuccinate synthetase isozyme 1 B (adss1-b) (Xenopus laevis (African clawed frog)).